Reading from the N-terminus, the 190-residue chain is Vascular endothelial growth factor A (190 aa).

The N-terminal stretch at 1-26 (MNFLLSWVHWSLALLLYLHHAKWSQA) is a signal peptide. Cystine bridges form between cysteine 51–cysteine 93, cysteine 82–cysteine 127, and cysteine 86–cysteine 129. A glycan (N-linked (GlcNAc...) asparagine) is linked at asparagine 100.

It belongs to the PDGF/VEGF growth factor family. As to quaternary structure, homodimer; disulfide-linked. Also found as heterodimer with PGF. Interacts with NRP1. Interacts with BSG. Interacts with CD82; this interaction inhibits VEGFA-mediated signaling pathway.

The protein resides in the secreted. Its function is as follows. Growth factor active in angiogenesis, vasculogenesis and endothelial cell growth. Induces endothelial cell proliferation, promotes cell migration, inhibits apoptosis and induces permeabilization of blood vessels. Binds to the FLT1/VEGFR1 and KDR/VEGFR2 receptors, heparan sulfate and heparin. Binding to NRP1 receptor initiates a signaling pathway needed for motor neuron axon guidance and cell body migration, including for the caudal migration of facial motor neurons from rhombomere 4 to rhombomere 6 during embryonic development. Also binds the DEAR/FBXW7-AS1 receptor. The chain is Vascular endothelial growth factor A (VEGFA) from Bos taurus (Bovine).